The chain runs to 225 residues: NAD(P)H-quinone oxidoreductase subunit K, chloroplastic (225 aa).

4 residues coordinate [4Fe-4S] cluster: C43, C44, C108, and C139.

This sequence belongs to the complex I 20 kDa subunit family. As to quaternary structure, NDH is composed of at least 16 different subunits, 5 of which are encoded in the nucleus. [4Fe-4S] cluster serves as cofactor.

It is found in the plastid. It localises to the chloroplast thylakoid membrane. It carries out the reaction a plastoquinone + NADH + (n+1) H(+)(in) = a plastoquinol + NAD(+) + n H(+)(out). The enzyme catalyses a plastoquinone + NADPH + (n+1) H(+)(in) = a plastoquinol + NADP(+) + n H(+)(out). In terms of biological role, NDH shuttles electrons from NAD(P)H:plastoquinone, via FMN and iron-sulfur (Fe-S) centers, to quinones in the photosynthetic chain and possibly in a chloroplast respiratory chain. The immediate electron acceptor for the enzyme in this species is believed to be plastoquinone. Couples the redox reaction to proton translocation, and thus conserves the redox energy in a proton gradient. This is NAD(P)H-quinone oxidoreductase subunit K, chloroplastic from Oenothera argillicola (Appalachian evening primrose).